The following is a 456-amino-acid chain: tRNA-2-methylthio-N(6)-dimethylallyladenosine synthase (456 aa).

Residues 19 to 136 (LTFNVQTFGC…LAELIYARHT (118 aa)) form the MTTase N-terminal domain. The [4Fe-4S] cluster site is built by Cys28, Cys63, Cys97, Cys173, Cys177, and Cys180. The Radical SAM core domain occupies 159-389 (QKYKFKAGVN…LTTIRESSSK (231 aa)). A TRAM domain is found at 392-455 (KDDEGKIAEV…GFYYMGEMME (64 aa)).

Belongs to the methylthiotransferase family. MiaB subfamily. Monomer. The cofactor is [4Fe-4S] cluster.

It localises to the cytoplasm. The enzyme catalyses N(6)-dimethylallyladenosine(37) in tRNA + (sulfur carrier)-SH + AH2 + 2 S-adenosyl-L-methionine = 2-methylsulfanyl-N(6)-dimethylallyladenosine(37) in tRNA + (sulfur carrier)-H + 5'-deoxyadenosine + L-methionine + A + S-adenosyl-L-homocysteine + 2 H(+). Catalyzes the methylthiolation of N6-(dimethylallyl)adenosine (i(6)A), leading to the formation of 2-methylthio-N6-(dimethylallyl)adenosine (ms(2)i(6)A) at position 37 in tRNAs that read codons beginning with uridine. The polypeptide is tRNA-2-methylthio-N(6)-dimethylallyladenosine synthase (Lachnoclostridium phytofermentans (strain ATCC 700394 / DSM 18823 / ISDg) (Clostridium phytofermentans)).